The primary structure comprises 419 residues: Protein translocase subunit SecY (419 aa).

10 consecutive transmembrane segments (helical) span residues 19–39 (IMILIFARLGNYIPIPGITEV), 64–84 (VISILTLGLGPFFSASLAVQF), 113–133 (ILTVLFCIIESFFLSNSLRSF), 143–163 (FVVAAAVTTGSLVLVWLSEVI), 167–189 (GIGNGSSLLILIGNLSRFRFLIN), 202–222 (SNLYIIYIIITLVSMLIFSTL), 255–275 (FGQAGVVPIIFSSSILLFLTT), 299–319 (IFYFFTFLVLIIFFSFFYTLI), 359–379 (FVGSILLSALILIPSILAAAL), and 380–400 (GVHPLSISGITSLILSFSIIN).

This sequence belongs to the SecY/SEC61-alpha family. Component of the plastid Sec protein translocase complex, which is composed of at least SecY and SecE.

It localises to the plastid. It is found in the chloroplast thylakoid membrane. The central subunit of the protein translocation channel SecYE. Consists of two halves formed by TMs 1-5 and 6-10. These two domains form a lateral gate at the front which open onto the bilayer between TMs 2 and 7, and are clamped together by SecE at the back. The channel is closed by both a pore ring composed of hydrophobic SecY resides and a short helix (helix 2A) on the extracellular side of the membrane which forms a plug. This Diacronema lutheri (Unicellular marine alga) protein is Protein translocase subunit SecY.